Consider the following 624-residue polypeptide: Phosphomethylpyrimidine synthase (624 aa).

Positions 48-70 (SDTHTSQGREKNPPLTVYDTSGP) are disordered. Residues asparagine 229, methionine 258, tyrosine 287, histidine 323, 343 to 345 (SRG), 384 to 387 (DGLR), and glutamate 423 contribute to the substrate site. Histidine 427 contributes to the Zn(2+) binding site. Substrate is bound at residue tyrosine 450. Histidine 491 provides a ligand contact to Zn(2+). [4Fe-4S] cluster-binding residues include cysteine 571, cysteine 574, and cysteine 579.

The protein belongs to the ThiC family. As to quaternary structure, homodimer. It depends on [4Fe-4S] cluster as a cofactor.

It carries out the reaction 5-amino-1-(5-phospho-beta-D-ribosyl)imidazole + S-adenosyl-L-methionine = 4-amino-2-methyl-5-(phosphooxymethyl)pyrimidine + CO + 5'-deoxyadenosine + formate + L-methionine + 3 H(+). It participates in cofactor biosynthesis; thiamine diphosphate biosynthesis. Catalyzes the synthesis of the hydroxymethylpyrimidine phosphate (HMP-P) moiety of thiamine from aminoimidazole ribotide (AIR) in a radical S-adenosyl-L-methionine (SAM)-dependent reaction. This is Phosphomethylpyrimidine synthase from Nitrosococcus oceani (strain ATCC 19707 / BCRC 17464 / JCM 30415 / NCIMB 11848 / C-107).